Consider the following 391-residue polypeptide: Carbamoyl phosphate synthase small chain (391 aa).

The CPSase stretch occupies residues 1–202 (MTQPAILVLE…AHASAGSGEE (202 aa)). Ser47, Gly254, and Gly256 together coordinate L-glutamine. In terms of domain architecture, Glutamine amidotransferase type-1 spans 206-391 (KVVAYDYGVK…RFVDLMAARA (186 aa)). Cys282 (nucleophile) is an active-site residue. 5 residues coordinate L-glutamine: Leu283, Gln286, Asn324, Gly326, and Phe327. Active-site residues include His366 and Glu368.

The protein belongs to the CarA family. As to quaternary structure, composed of two chains; the small (or glutamine) chain promotes the hydrolysis of glutamine to ammonia, which is used by the large (or ammonia) chain to synthesize carbamoyl phosphate. Tetramer of heterodimers (alpha,beta)4.

It carries out the reaction hydrogencarbonate + L-glutamine + 2 ATP + H2O = carbamoyl phosphate + L-glutamate + 2 ADP + phosphate + 2 H(+). It catalyses the reaction L-glutamine + H2O = L-glutamate + NH4(+). It participates in amino-acid biosynthesis; L-arginine biosynthesis; carbamoyl phosphate from bicarbonate: step 1/1. It functions in the pathway pyrimidine metabolism; UMP biosynthesis via de novo pathway; (S)-dihydroorotate from bicarbonate: step 1/3. Functionally, small subunit of the glutamine-dependent carbamoyl phosphate synthetase (CPSase). CPSase catalyzes the formation of carbamoyl phosphate from the ammonia moiety of glutamine, carbonate, and phosphate donated by ATP, constituting the first step of 2 biosynthetic pathways, one leading to arginine and/or urea and the other to pyrimidine nucleotides. The small subunit (glutamine amidotransferase) binds and cleaves glutamine to supply the large subunit with the substrate ammonia. The chain is Carbamoyl phosphate synthase small chain from Xanthomonas axonopodis pv. citri (strain 306).